A 967-amino-acid polypeptide reads, in one-letter code: Vitamin B12-dependent ribonucleotide reductase (967 aa).

The disordered stretch occupies residues 1-23 (MTETASGPARSSRAKGTKAGKGL). Substrate contacts are provided by residues serine 143, 159–160 (AC), glycine 188, 364–368 (NPCSE), and 554–558 (PTGTI). Residues cysteine 160 and cysteine 377 are joined by a disulfide bond. Asparagine 364 serves as the catalytic Proton acceptor. The active-site Cysteine radical intermediate is cysteine 366. Glutamate 368 serves as the catalytic Proton acceptor.

It belongs to the ribonucleoside diphosphate reductase class-2 family. Adenosylcob(III)alamin is required as a cofactor.

The enzyme catalyses a 2'-deoxyribonucleoside 5'-diphosphate + [thioredoxin]-disulfide + H2O = a ribonucleoside 5'-diphosphate + [thioredoxin]-dithiol. In terms of biological role, catalyzes the reduction of ribonucleotides to deoxyribonucleotides. May function to provide a pool of deoxyribonucleotide precursors for DNA repair during oxygen limitation and/or for immediate growth after restoration of oxygen. In Streptomyces coelicolor (strain ATCC BAA-471 / A3(2) / M145), this protein is Vitamin B12-dependent ribonucleotide reductase (nrdJ).